The following is a 695-amino-acid chain: MKAPIPHLILLYATFTQSLKVVTKRGSADGCTDWSVDIKKYQVLVGEPVRIKCALFYGYIRTNYSLAQSAGLSLMWYKSSGPGDFEEPIAFDGSRMSKEEDSIWFRPTLLQDSGLYACVIRNSTYCMKVSISLTVGENDTGLCYNSKMKYFEKAELSKSKEISCRDIEDFLLPTREPEILWYKECRTKAWRPSIVFKRDTLLIKEVKEDDIGNYTCELKYGGFVVRRTTELTVTAPLTDKPPKLLYPMESKLTVQETQLGGSANLTCRAFFGYSGDVSPLIYWMKGEKFIEDLDENRVWESDIRILKEHLGEQEVSISLIVDSVEEGDLGNYSCYVENGNGRRHASVLLHKRELMYTVELAGGLGAILLLLICSVTIYKCYKIEIMLFYRNHFGAEELDGDNKDYDAYLSYTKVDPDQWNQETGEEERFALEILPDMLEKHYGYKLFIPDRDLIPTGNIEDVARCVDQSKRLIIVMTPNYVVRRGWSIFELETRLRNMLVTGEIKVILIECSELRGIMNYQEVEALKHTIKLLTVIKWHGPKCNKLNSKFWKRLQYEMPFKRIEPITHEQALDVSEQGPFGELQTVSAISMAAATSTALATAHPDLRSTFHNTYHSQMRQKHYYRSYEYDVPPTGTLPLTSIGNQHTYCNIPMTLINGQRPQTKSNREPNPDEAHTNSAILPLLPRETSISSVIW.

Residues 1 to 24 form the signal peptide; the sequence is MKAPIPHLILLYATFTQSLKVVTK. Residues 25 to 134 enclose the Ig-like C2-type 1 domain; the sequence is RGSADGCTDW…YCMKVSISLT (110 aa). The Extracellular segment spans residues 25–357; it reads RGSADGCTDW…LLHKRELMYT (333 aa). Intrachain disulfides connect Cys-31–Cys-126 and Cys-53–Cys-118. N-linked (GlcNAc...) asparagine glycans are attached at residues Asn-63, Asn-122, and Asn-138. Cystine bridges form between Cys-143–Cys-185 and Cys-164–Cys-216. Ig-like C2-type domains are found at residues 143–232 and 242–350; these read CYNS…TELT and PKLL…VLLH. N-linked (GlcNAc...) asparagine glycans are attached at residues Asn-213, Asn-264, and Asn-331. Cys-267 and Cys-334 form a disulfide bridge. A helical membrane pass occupies residues 358 to 378; sequence VELAGGLGAILLLLICSVTIY. Topologically, residues 379–695 are cytoplasmic; it reads KCYKIEIMLF…RETSISSVIW (317 aa). The TIR domain maps to 403 to 558; sequence KDYDAYLSYT…KFWKRLQYEM (156 aa). The active site involves Glu-490. Residues 548–643 are interaction with NCS1; that stretch reads SKFWKRLQYE…TGTLPLTSIG (96 aa). The tract at residues 657-679 is disordered; the sequence is NGQRPQTKSNREPNPDEAHTNSA. The span at 665–675 shows a compositional bias: basic and acidic residues; sequence SNREPNPDEAH.

Belongs to the interleukin-1 receptor family. In terms of assembly, homodimer. Interacts (calcium-independent) with NCS1/FREQ. Interacts (via the first immunoglobilin domain) with PTPRD (via the second immunoglobilin domain); this interaction is PTPRD-splicing-dependent and induces pre- and post-synaptic differentiation of neurons and is required for IL1RAPL1-mediated synapse formation. In terms of tissue distribution, detected in total brain extracts, olfactory bulb, hippocampus and striatum (at protein level).

It localises to the cell membrane. Its subcellular location is the cytoplasm. The protein localises to the cell projection. It is found in the axon. The protein resides in the dendrite. It carries out the reaction NAD(+) + H2O = ADP-D-ribose + nicotinamide + H(+). Functionally, may regulate secretion and presynaptic differentiation through inhibition of the activity of N-type voltage-gated calcium channel. May activate the MAP kinase JNK. Plays a role in neurite outgrowth. During dendritic spine formation can bidirectionally induce pre- and post-synaptic differentiation of neurons by trans-synaptically binding to PTPRD. This chain is Interleukin-1 receptor accessory protein-like 1 (Il1rapl1), found in Mus musculus (Mouse).